We begin with the raw amino-acid sequence, 278 residues long: Large ribosomal subunit protein uL2 (278 aa).

The tract at residues 222 to 278 (GVVMNPIDHPHGGGEGRTSGGRHPVTPWGKPTKGKKTRSNKSTNKFILISRHKRKKK) is disordered.

It belongs to the universal ribosomal protein uL2 family. As to quaternary structure, part of the 50S ribosomal subunit. Forms a bridge to the 30S subunit in the 70S ribosome.

Functionally, one of the primary rRNA binding proteins. Required for association of the 30S and 50S subunits to form the 70S ribosome, for tRNA binding and peptide bond formation. It has been suggested to have peptidyltransferase activity; this is somewhat controversial. Makes several contacts with the 16S rRNA in the 70S ribosome. This Afipia carboxidovorans (strain ATCC 49405 / DSM 1227 / KCTC 32145 / OM5) (Oligotropha carboxidovorans) protein is Large ribosomal subunit protein uL2.